We begin with the raw amino-acid sequence, 512 residues long: UDP-N-acetylmuramate--L-alanine ligase (512 aa).

Residue 132–138 participates in ATP binding; sequence GAHGKTT.

It belongs to the MurCDEF family.

The protein resides in the cytoplasm. The enzyme catalyses UDP-N-acetyl-alpha-D-muramate + L-alanine + ATP = UDP-N-acetyl-alpha-D-muramoyl-L-alanine + ADP + phosphate + H(+). It participates in cell wall biogenesis; peptidoglycan biosynthesis. In terms of biological role, cell wall formation. This Bifidobacterium longum (strain DJO10A) protein is UDP-N-acetylmuramate--L-alanine ligase.